Reading from the N-terminus, the 459-residue chain is ATP synthase subunit beta (459 aa).

Residue G149 to T156 participates in ATP binding.

This sequence belongs to the ATPase alpha/beta chains family. F-type ATPases have 2 components, CF(1) - the catalytic core - and CF(0) - the membrane proton channel. CF(1) has five subunits: alpha(3), beta(3), gamma(1), delta(1), epsilon(1). CF(0) has three main subunits: a(1), b(2) and c(9-12). The alpha and beta chains form an alternating ring which encloses part of the gamma chain. CF(1) is attached to CF(0) by a central stalk formed by the gamma and epsilon chains, while a peripheral stalk is formed by the delta and b chains.

The protein resides in the cell inner membrane. The catalysed reaction is ATP + H2O + 4 H(+)(in) = ADP + phosphate + 5 H(+)(out). Its function is as follows. Produces ATP from ADP in the presence of a proton gradient across the membrane. The catalytic sites are hosted primarily by the beta subunits. This is ATP synthase subunit beta from Pseudomonas savastanoi pv. phaseolicola (strain 1448A / Race 6) (Pseudomonas syringae pv. phaseolicola (strain 1448A / Race 6)).